We begin with the raw amino-acid sequence, 344 residues long: Phenylalanine--tRNA ligase alpha subunit (344 aa).

Glu-256 is a binding site for Mg(2+).

It belongs to the class-II aminoacyl-tRNA synthetase family. Phe-tRNA synthetase alpha subunit type 1 subfamily. In terms of assembly, tetramer of two alpha and two beta subunits. The cofactor is Mg(2+).

Its subcellular location is the cytoplasm. The catalysed reaction is tRNA(Phe) + L-phenylalanine + ATP = L-phenylalanyl-tRNA(Phe) + AMP + diphosphate + H(+). The protein is Phenylalanine--tRNA ligase alpha subunit of Shouchella clausii (strain KSM-K16) (Alkalihalobacillus clausii).